We begin with the raw amino-acid sequence, 1136 residues long: Probable RNA-dependent RNA polymerase 2 (1136 aa).

The tract at residues Ser-965–Pro-989 is disordered. Over residues Asp-967–Pro-980 the composition is skewed to low complexity.

The protein belongs to the RdRP family.

The enzyme catalyses RNA(n) + a ribonucleoside 5'-triphosphate = RNA(n+1) + diphosphate. In terms of biological role, probably involved in the RNA silencing pathway and required for the generation of small interfering RNAs (siRNAs). The sequence is that of Probable RNA-dependent RNA polymerase 2 (RDR2) from Oryza sativa subsp. japonica (Rice).